The chain runs to 96 residues: Myosuppressin (96 aa).

A signal peptide spans 1–24 (MALGNGYYCAVVCVVLACASVVLC). Residues 25-80 (APAQLCAGAADDDPRAARFCQALNTFLELYAEAAGEQVPEYQALVRDYPQLLDTGM) constitute a propeptide that is removed on maturation. Gln-83 is subject to Pyrrolidone carboxylic acid; partial. Phe-92 is modified (phenylalanine amide). Residue Arg-96 is a propeptide.

The protein belongs to the myosuppressin family. In terms of tissue distribution, expressed in corpora cardiaca (CC), corpora allata (CA), antennal lobe (AL) and gnathal ganglion (GNG) (at protein level). In its non-pyroglutamate form, expression in GNG detected in all animals, in AL, CC and in CA in most animals (at protein level). In its pyroglutamate form, expression in CC, CA and GNG detected in all animals, in AL in some animals (at protein level).

It localises to the secreted. In terms of biological role, myoinhibiting neuropeptide. The chain is Myosuppressin from Agrotis ipsilon (Black cutworm moth).